The chain runs to 193 residues: Cerebellin-1 (193 aa).

The first 21 residues, 1 to 21, serve as a signal peptide directing secretion; sequence MLGVLELLLLGAAWLAGPARG. Asn-23 carries an N-linked (GlcNAc...) asparagine glycan. The interval 34–38 is essential for interaction with NRXN1 and linker of two C1q trimers into disulfide-linked hexamers; sequence CLVVC. A C1q domain is found at 57 to 193; sequence SGSAKVAFSA…TFSGFLVFPL (137 aa). The necessary for interaction with CBLN3, and homotrimerization stretch occupies residues 62–193; it reads VAFSAIRSTN…TFSGFLVFPL (132 aa). The N-linked (GlcNAc...) asparagine glycan is linked to Asn-79. An essential for interaction with GRID2 region spans residues 122–147; the sequence is YNRQTIQVSLMLNGWPVISAFAGDQD.

In terms of assembly, homohexamer; disulfide-linked homotrimers. The trimers associate via N-terminal cysteine residues to form disulfide-linked hexamers. May form oligomers with CBLN2, CBLN3 AND CBLN4 prior to secretion. Once secreted, does not interact with other CBLN family members. Interacts with GRID1. Interacts with NRXN1 and NRXN2 long (alpha) and short (beta) isoforms produced by alternative promoter usage. Competes with NLGN1 for NRXN1-binding. Weakly interacts with NRXN3 short isoform and not at all with NRXN3 long isoform. Interacts (via C1q domain) with GRID2; GRID2-binding is calcium-independent; CBLN1 hexamers anchor GRID2 N-terminal domain dimers to monomeric NRXN1 isoform beta; promotes synaptogenesis and mediates the D-Serine-dependent long term depression signals and AMPA receptor endocytosis. Interacts with OTOL1. The proteolytic processing to yield cerebellin seems to occur either prior to the secretion by presynaptic neurons and subsequent oligomerization or in some other location after release of the mature protein. Post-translationally, sialoglycoprotein. As to expression, in the Purkinje cells postsynaptic structures. In the cerebellum, cerebellin is much less abundant than [des-Ser1]-cerebellin.

It is found in the secreted. The protein localises to the postsynaptic cell membrane. Functionally, required for synapse integrity and synaptic plasticity. During cerebellar synapse formation, essential for the matching and maintenance of pre- and post-synaptic elements at parallel fiber-Purkinje cell synapses, the establishment of the proper pattern of climbing fiber-Purkinje cell innervation, and induction of long-term depression at parallel fiber-Purkinje cell synapses. Plays a role as a synaptic organizer that acts bidirectionally on both pre- and post-synaptic components. On the one hand induces accumulation of synaptic vesicles in the pre-synaptic part by binding with NRXN1 and in other hand induces clustering of GRID2 and its associated proteins at the post-synaptic site through association of GRID2. NRXN1-CBLN1-GRID2 complex directly induces parallel fiber protrusions that encapsulate spines of Purkinje cells leading to accumulation of GRID2 and synaptic vesicles. Required for CBLN3 export from the endoplasmic reticulum and secretion. NRXN1-CBLN1-GRID2 complex mediates the D-Serine-dependent long term depression signals and AMPA receptor endocytosis. Essential for long-term maintenance but not establishment of excitatory synapses. Inhibits the formation and function of inhibitory GABAergic synapses in cerebellar Purkinje cells. The cerebellin peptide exerts neuromodulatory functions. Directly stimulates norepinephrine release via the adenylate cyclase/PKA-dependent signaling pathway; and indirectly enhances adrenocortical secretion in vivo, through a paracrine mechanism involving medullary catecholamine release. The chain is Cerebellin-1 (CBLN1) from Homo sapiens (Human).